The sequence spans 144 residues: Large-conductance mechanosensitive channel (144 aa).

The next 2 membrane-spanning stretches (helical) occupy residues 16-36 (VIDLAVGVIIGAAFGKIVDSV) and 86-106 (GNFLTIVVNFVILAFIIFMMV).

The protein belongs to the MscL family. In terms of assembly, homopentamer.

It is found in the cell inner membrane. Its function is as follows. Channel that opens in response to stretch forces in the membrane lipid bilayer. May participate in the regulation of osmotic pressure changes within the cell. In Cupriavidus metallidurans (strain ATCC 43123 / DSM 2839 / NBRC 102507 / CH34) (Ralstonia metallidurans), this protein is Large-conductance mechanosensitive channel.